We begin with the raw amino-acid sequence, 145 residues long: Transcriptional regulator SlyA (145 aa).

The 134-residue stretch at 2–135 folds into the HTH marR-type domain; the sequence is ELPLGSDLAR…LALLVARLEK (134 aa). Positions 49–72 form a DNA-binding region, H-T-H motif; the sequence is QIQLAKAIGIEQPSLVRTLDQLEE.

Belongs to the SlyA family. In terms of assembly, homodimer.

Functionally, transcription regulator that can specifically activate or repress expression of target genes. This Pectobacterium carotovorum subsp. carotovorum (strain PC1) protein is Transcriptional regulator SlyA.